Here is a 321-residue protein sequence, read N- to C-terminus: tRNA(Ile)-lysidine synthase (321 aa).

30-35 (SGGSDS) is an ATP binding site.

The protein belongs to the tRNA(Ile)-lysidine synthase family.

It localises to the cytoplasm. The enzyme catalyses cytidine(34) in tRNA(Ile2) + L-lysine + ATP = lysidine(34) in tRNA(Ile2) + AMP + diphosphate + H(+). Functionally, ligates lysine onto the cytidine present at position 34 of the AUA codon-specific tRNA(Ile) that contains the anticodon CAU, in an ATP-dependent manner. Cytidine is converted to lysidine, thus changing the amino acid specificity of the tRNA from methionine to isoleucine. The polypeptide is tRNA(Ile)-lysidine synthase (Chlamydia trachomatis serovar A (strain ATCC VR-571B / DSM 19440 / HAR-13)).